Reading from the N-terminus, the 277-residue chain is MKFTKMHGLGNDYIYVDAISQKIENPNEISKFVSDRHFGIGSDGLVLILPSDVADFKMRMFNSDGSEAEMCGNAIRCVGKFVYDKKMTDKSTISIETLAGIKVLEMTVENGKVVLVKVDMGEPILKAETIPVLSEKHPVIDEEITAKDYCYNFTCVSMGNPHAITYIENVEEFPLEKIGPLFEVHEKFPKKTNVEFVELIDDSTVKMRVWERGAGETLACGTGACAVLTASVLKGYVGRKATVKLLGGDLIIEWNEKDNHIYMTGPATTVFEGEIDI.

Residues Asn-11 and Asn-62 each coordinate substrate. Cys-71 acts as the Proton donor in catalysis. Substrate is bound by residues 72–73 (GN), Asn-160, Asn-193, and 211–212 (ER). The Proton acceptor role is filled by Cys-220. 221–222 (GT) contacts substrate.

Belongs to the diaminopimelate epimerase family. In terms of assembly, homodimer.

The protein localises to the cytoplasm. It carries out the reaction (2S,6S)-2,6-diaminopimelate = meso-2,6-diaminopimelate. The protein operates within amino-acid biosynthesis; L-lysine biosynthesis via DAP pathway; DL-2,6-diaminopimelate from LL-2,6-diaminopimelate: step 1/1. In terms of biological role, catalyzes the stereoinversion of LL-2,6-diaminopimelate (L,L-DAP) to meso-diaminopimelate (meso-DAP), a precursor of L-lysine. In Methanococcus maripaludis (strain C5 / ATCC BAA-1333), this protein is Diaminopimelate epimerase.